A 391-amino-acid polypeptide reads, in one-letter code: Elongation factor Tu (391 aa).

One can recognise a tr-type G domain in the interval lysine 10–glutamate 201. Residues glycine 19–threonine 26 are G1. Glycine 19–threonine 26 lines the GTP pocket. Threonine 26 lines the Mg(2+) pocket. The G2 stretch occupies residues glycine 55–serine 59. The interval aspartate 76–glycine 79 is G3. Residues aspartate 76 to histidine 80 and asparagine 131 to aspartate 134 contribute to the GTP site. Residues asparagine 131–aspartate 134 form a G4 region. The segment at serine 169 to leucine 171 is G5.

This sequence belongs to the TRAFAC class translation factor GTPase superfamily. Classic translation factor GTPase family. EF-Tu/EF-1A subfamily. Monomer.

It localises to the cytoplasm. The catalysed reaction is GTP + H2O = GDP + phosphate + H(+). Its function is as follows. GTP hydrolase that promotes the GTP-dependent binding of aminoacyl-tRNA to the A-site of ribosomes during protein biosynthesis. The protein is Elongation factor Tu of Rhizobium meliloti (strain 1021) (Ensifer meliloti).